The chain runs to 182 residues: Meiotically up-regulated gene 82 protein (182 aa).

The tract at residues E161–D182 is disordered. Residues Y169 to D182 show a composition bias toward basic residues.

Belongs to the prokaryotic/mitochondrial release factor family.

The protein resides in the mitochondrion. Has a role in meiosis. The chain is Meiotically up-regulated gene 82 protein (mug82) from Schizosaccharomyces pombe (strain 972 / ATCC 24843) (Fission yeast).